The sequence spans 274 residues: Rhamnulose-1-phosphate aldolase (274 aa).

Glu-117 is a catalytic residue. 3 residues coordinate Zn(2+): His-141, His-143, and His-212.

Belongs to the aldolase class II family. RhaD subfamily. In terms of assembly, homotetramer. It depends on Zn(2+) as a cofactor.

Its subcellular location is the cytoplasm. The catalysed reaction is L-rhamnulose 1-phosphate = (S)-lactaldehyde + dihydroxyacetone phosphate. It functions in the pathway carbohydrate degradation; L-rhamnose degradation; glycerone phosphate from L-rhamnose: step 3/3. In terms of biological role, catalyzes the reversible cleavage of L-rhamnulose-1-phosphate to dihydroxyacetone phosphate (DHAP) and L-lactaldehyde. The sequence is that of Rhamnulose-1-phosphate aldolase from Shigella sonnei (strain Ss046).